A 113-amino-acid polypeptide reads, in one-letter code: Iron-sulfur cluster assembly protein CyaY (113 aa).

The protein belongs to the frataxin family.

Functionally, involved in iron-sulfur (Fe-S) cluster assembly. May act as a regulator of Fe-S biogenesis. In Ralstonia nicotianae (strain ATCC BAA-1114 / GMI1000) (Ralstonia solanacearum), this protein is Iron-sulfur cluster assembly protein CyaY.